The sequence spans 383 residues: Chaperone protein DnaJ (383 aa).

A J domain is found at 5 to 70; the sequence is DYYEALGVAR…QKRAAYDQFG (66 aa). Residues 139–217 form a CR-type zinc finger; it reads GTEVQIRVPT…CGGRGRVQSQ (79 aa). Zn(2+) contacts are provided by Cys-152, Cys-155, Cys-169, Cys-172, Cys-191, Cys-194, Cys-205, and Cys-208. 4 CXXCXGXG motif repeats span residues 152 to 159, 169 to 176, 191 to 198, and 205 to 212; these read CDACDGKG, CPTCKGHG, CPRCGGSG, and CRKCGGRG. Residues 230–249 form a disordered region; that stretch reads TGDRIRLSGEGEPGENGGPP.

Belongs to the DnaJ family. In terms of assembly, homodimer. Zn(2+) is required as a cofactor.

It is found in the cytoplasm. Its function is as follows. Participates actively in the response to hyperosmotic and heat shock by preventing the aggregation of stress-denatured proteins and by disaggregating proteins, also in an autonomous, DnaK-independent fashion. Unfolded proteins bind initially to DnaJ; upon interaction with the DnaJ-bound protein, DnaK hydrolyzes its bound ATP, resulting in the formation of a stable complex. GrpE releases ADP from DnaK; ATP binding to DnaK triggers the release of the substrate protein, thus completing the reaction cycle. Several rounds of ATP-dependent interactions between DnaJ, DnaK and GrpE are required for fully efficient folding. Also involved, together with DnaK and GrpE, in the DNA replication of plasmids through activation of initiation proteins. The polypeptide is Chaperone protein DnaJ (Alkalilimnicola ehrlichii (strain ATCC BAA-1101 / DSM 17681 / MLHE-1)).